Consider the following 703-residue polypeptide: DNA ligase (703 aa).

Residues 54 to 58 (DAEYD), 103 to 104 (SL), and E132 contribute to the NAD(+) site. K134 serves as the catalytic N6-AMP-lysine intermediate. NAD(+)-binding residues include R155, E192, K308, and K332. Zn(2+)-binding residues include C426, C429, C444, and C450. The region spanning 608–698 (EGPGPLDGVV…ADAARALAVP (91 aa)) is the BRCT domain.

This sequence belongs to the NAD-dependent DNA ligase family. LigA subfamily. Mg(2+) serves as cofactor. It depends on Mn(2+) as a cofactor.

It catalyses the reaction NAD(+) + (deoxyribonucleotide)n-3'-hydroxyl + 5'-phospho-(deoxyribonucleotide)m = (deoxyribonucleotide)n+m + AMP + beta-nicotinamide D-nucleotide.. In terms of biological role, DNA ligase that catalyzes the formation of phosphodiester linkages between 5'-phosphoryl and 3'-hydroxyl groups in double-stranded DNA using NAD as a coenzyme and as the energy source for the reaction. It is essential for DNA replication and repair of damaged DNA. In Parafrankia sp. (strain EAN1pec), this protein is DNA ligase.